We begin with the raw amino-acid sequence, 517 residues long: Xylosidase/arabinosidase (517 aa).

Asp-15 acts as the Proton acceptor in catalysis. Glu-185 serves as the catalytic Proton donor.

Belongs to the glycosyl hydrolase 43 family.

It catalyses the reaction Hydrolysis of (1-&gt;4)-beta-D-xylans, to remove successive D-xylose residues from the non-reducing termini.. The enzyme catalyses Hydrolysis of terminal non-reducing alpha-L-arabinofuranoside residues in alpha-L-arabinosides.. Functionally, has a 1.6-fold higher activity as an arabinosidase than as a beta-xylosidase when tested on the substrates nitrophenyl-beta-D-xylopyranoside and P-nitrophenyl-alpha-L-arabinofuranoside. This is Xylosidase/arabinosidase (xylB) from Butyrivibrio fibrisolvens.